A 227-amino-acid chain; its full sequence is Small ribosomal subunit protein uS3m (227 aa).

The protein belongs to the universal ribosomal protein uS3 family. In terms of assembly, component of the mitochondrial small ribosomal subunit (mt-SSU). Mature yeast 74S mitochondrial ribosomes consist of a small (37S) and a large (54S) subunit. The 37S small subunit contains a 15S ribosomal RNA (15S mt-rRNA) and at least 32 different proteins. The 54S large subunit contains a 21S rRNA (21S mt-rRNA) and at least 45 different proteins. uS3m, uS4m and uS5m form the narrow entry site of the mRNA channel.

Its subcellular location is the mitochondrion. In terms of biological role, essential for mitochondrial protein synthesis and required for the maturation of small ribosomal subunits. Its function is as follows. Component of the mitochondrial ribosome (mitoribosome), a dedicated translation machinery responsible for the synthesis of mitochondrial genome-encoded proteins, including at least some of the essential transmembrane subunits of the mitochondrial respiratory chain. The mitoribosomes are attached to the mitochondrial inner membrane and translation products are cotranslationally integrated into the membrane. uS3m is essential for mitochondrial protein synthesis and required for the maturation of small ribosomal subunits. The chain is Small ribosomal subunit protein uS3m (var1) from Schizosaccharomyces pombe (strain 972 / ATCC 24843) (Fission yeast).